A 396-amino-acid chain; its full sequence is DNA polymerase interacting tetratricopeptide repeat-containing, protein of 47 kDa (396 aa).

TPR repeat units lie at residues 91–124, 129–162, and 163–196; these read ALNY…KTDN, AVLY…KPDY, and TKAR…DVDN.

The protein belongs to the TTC4 family. In terms of assembly, forms a complex with Hsp83 and Hsp70aa. Interacts with DNApol-alpha180; the interaction inhibits the activity of the DNA polymerase and occurs only in proliferating cells but not in quiescent cells. More abundant in young embryos, pupae and females and a lower level expression seen in late embryos, larvae and males.

Its subcellular location is the nucleus. It is found in the nucleoplasm. The protein resides in the cytoplasm. Its function is as follows. May act as a co-chaperone for HSP83. This chain is DNA polymerase interacting tetratricopeptide repeat-containing, protein of 47 kDa (Dpit47), found in Drosophila melanogaster (Fruit fly).